A 462-amino-acid chain; its full sequence is B3 domain-containing protein REM8 (462 aa).

3 DNA-binding regions (TF-B3) span residues 11–103 (NKHF…LGPS), 148–243 (CFSQ…LCSR), and 249–346 (FVKL…FSKI). Positions 351-419 (FEAEDRRHKR…NLQKTQACSV (69 aa)) are disordered. Residues 369–397 (ETDKGEPSRATKMGPELEKREKTAEKGEP) show a composition bias toward basic and acidic residues. Over residues 399 to 418 (RASNKSSGKQGNLQKTQACS) the composition is skewed to polar residues.

The protein localises to the nucleus. The chain is B3 domain-containing protein REM8 (REM8) from Arabidopsis thaliana (Mouse-ear cress).